Reading from the N-terminus, the 145-residue chain is Cytochrome b (145 aa).

Residues 38–58 form a helical membrane-spanning segment; the sequence is FFALHFLLPFVLAALVIMHLI. Heme b is bound by residues His42 and His56. An a ubiquinone-binding site is contributed by His61. A helical membrane pass occupies residues 85 to 105; it reads FVFKDLVTVFIFFIVLSVFVF.

The protein belongs to the cytochrome b family. As to quaternary structure, fungal cytochrome b-c1 complex contains 10 subunits; 3 respiratory subunits, 2 core proteins and 5 low-molecular weight proteins. Cytochrome b-c1 complex is a homodimer. Heme b is required as a cofactor.

It localises to the mitochondrion inner membrane. In terms of biological role, component of the ubiquinol-cytochrome c reductase complex (complex III or cytochrome b-c1 complex) that is part of the mitochondrial respiratory chain. The b-c1 complex mediates electron transfer from ubiquinol to cytochrome c. Contributes to the generation of a proton gradient across the mitochondrial membrane that is then used for ATP synthesis. This is Cytochrome b (cob) from Aspergillus fumigatus (Neosartorya fumigata).